The primary structure comprises 224 residues: Cysteine S-methyltransferase NleE (224 aa).

Positions 49–52 (GITR) are interaction with host proteins TAB2, TAB3 and ZRANB3. Ala92, Ser98, Arg107, Gln111, Tyr204, and Glu208 together coordinate S-adenosyl-L-methionine.

The protein belongs to the NleE/OspZ family. Monomer.

Its subcellular location is the secreted. It localises to the host nucleus. It carries out the reaction L-cysteinyl-[protein] + S-adenosyl-L-methionine = S-methyl-L-cysteinyl-[protein] + S-adenosyl-L-homocysteine + H(+). Its function is as follows. Cysteine methyltransferase effector that inhibits host cell NF-kappa-B activation by preventing nuclear translocation of host protein RELA/p65. Acts by mediating cysteine methylation of host proteins TAB2 and TAB3: methylation of a conserved cysteine residue of the RanBP2-type zinc finger (NZF) of TAB2 and TAB3 disrupts zinc-binding, thereby inactivating the ubiquitin chain-binding activity of TAB2 and TAB3, leading to NF-kappa-B inactivation. Also mediates cysteine methylation of host protein ZRANB3, inactivating its ability to bind ubiquitin chains. This chain is Cysteine S-methyltransferase NleE, found in Escherichia coli O127:H6 (strain E2348/69 / EPEC).